We begin with the raw amino-acid sequence, 431 residues long: MLDIQLLRSNTAAVAERLARRGYDFDTARFDTLEERRKSVQVKTEELQASRNSISKQIGALKGQGKHEEAQAAMNQVAQIKTDLEQAAADLDAVQKELDAWLLSIPNLPHESVPAGKDETENVEVRKVGTPREFDFEIKDHVDLGEPLGLDFEGGAKLSGARFTVMRGQIARLHRALAQFMLDTHTLQHGYTEHYTPYIVDDTTLQGTGQLPKFAEDLFHVTRGGDETKTTQYLIPTAEVTLTNTVADSIIPSEQLPLKLTAHSPCFRSEAGSYGKDTRGLIRQHQFDKVEMVQIVHPEKSYETLEEMVGHAENILKALELPYRVITLCTGDMGFGAAKTYDLEVWVPAQNTYREISSCSNCEDFQARRLKARFKDENGKNRLVHTLNGSGLAVGRTLVAVLENHQNADGSINIPAALQPYMGGVAKLEVK.

237 to 239 contributes to the L-serine binding site; that stretch reads TAE. 268–270 contributes to the ATP binding site; sequence RSE. Glutamate 291 contacts L-serine. 355–358 serves as a coordination point for ATP; the sequence is EISS. Serine 390 provides a ligand contact to L-serine.

The protein belongs to the class-II aminoacyl-tRNA synthetase family. Type-1 seryl-tRNA synthetase subfamily. As to quaternary structure, homodimer. The tRNA molecule binds across the dimer.

It localises to the cytoplasm. It carries out the reaction tRNA(Ser) + L-serine + ATP = L-seryl-tRNA(Ser) + AMP + diphosphate + H(+). The enzyme catalyses tRNA(Sec) + L-serine + ATP = L-seryl-tRNA(Sec) + AMP + diphosphate + H(+). Its pathway is aminoacyl-tRNA biosynthesis; selenocysteinyl-tRNA(Sec) biosynthesis; L-seryl-tRNA(Sec) from L-serine and tRNA(Sec): step 1/1. In terms of biological role, catalyzes the attachment of serine to tRNA(Ser). Is also able to aminoacylate tRNA(Sec) with serine, to form the misacylated tRNA L-seryl-tRNA(Sec), which will be further converted into selenocysteinyl-tRNA(Sec). This chain is Serine--tRNA ligase, found in Neisseria meningitidis serogroup B (strain ATCC BAA-335 / MC58).